The primary structure comprises 73 residues: Hypotensin-like peptide (73 aa).

Residues 1 to 25 (MKMMIAIVFVSILLLMFSLSSTAMG) form the signal peptide.

Expressed by the venom gland.

It is found in the secreted. May potentiate the hypotensive effect of bradykinin. The sequence is that of Hypotensin-like peptide from Tityus serrulatus (Brazilian scorpion).